Reading from the N-terminus, the 448-residue chain is B box and SPRY domain-containing protein (448 aa).

Residues 1–18 show a composition bias toward low complexity; it reads MSSDVSGTESGSESGPES. The interval 1 to 58 is disordered; it reads MSSDVSGTESGSESGPESVPEPVPEPGPEPESEPGPGPAPGPGPGPAPGPGPGLGREP. Pro residues predominate over residues 19–51; it reads VPEPVPEPGPEPESEPGPGPAPGPGPGPAPGPG. The B box-type zinc finger occupies 63–111; it reads QPCQLCPEHGKPLSWFCLSERRPVCATCAGFGGRCHRHRIRRAEEHAEE. Residues 257-448 enclose the B30.2/SPRY domain; that stretch reads SPLLTQLWAT…VADQVISIVC (192 aa).

Interacts with TRPV5 and TRPV6. Interacts with YWHAZ/14-3-3 protein zeta. Predominantly expressed in testis. Expressed in brain at low levels.

Its subcellular location is the cytoplasm. The protein localises to the membrane. In terms of biological role, may regulate epithelial calcium transport by inhibiting TRPV5 activity. This is B box and SPRY domain-containing protein (Bspry) from Rattus norvegicus (Rat).